Here is a 314-residue protein sequence, read N- to C-terminus: Aspartate carbamoyltransferase catalytic subunit (314 aa).

Residues arginine 64 and threonine 65 each contribute to the carbamoyl phosphate site. Residue lysine 92 participates in L-aspartate binding. Residues arginine 114, histidine 142, and glutamine 145 each coordinate carbamoyl phosphate. Arginine 175 and arginine 230 together coordinate L-aspartate. The carbamoyl phosphate site is built by glycine 271 and proline 272.

The protein belongs to the aspartate/ornithine carbamoyltransferase superfamily. ATCase family. In terms of assembly, heterododecamer (2C3:3R2) of six catalytic PyrB chains organized as two trimers (C3), and six regulatory PyrI chains organized as three dimers (R2).

The enzyme catalyses carbamoyl phosphate + L-aspartate = N-carbamoyl-L-aspartate + phosphate + H(+). It functions in the pathway pyrimidine metabolism; UMP biosynthesis via de novo pathway; (S)-dihydroorotate from bicarbonate: step 2/3. In terms of biological role, catalyzes the condensation of carbamoyl phosphate and aspartate to form carbamoyl aspartate and inorganic phosphate, the committed step in the de novo pyrimidine nucleotide biosynthesis pathway. The protein is Aspartate carbamoyltransferase catalytic subunit of Deinococcus radiodurans (strain ATCC 13939 / DSM 20539 / JCM 16871 / CCUG 27074 / LMG 4051 / NBRC 15346 / NCIMB 9279 / VKM B-1422 / R1).